The sequence spans 161 residues: Copper transporter 1 (161 aa).

2 helical membrane-spanning segments follow: residues 55-75 and 109-129; these read GGMY…VEFL and VAYL…LVAV.

Belongs to the copper transporter (Ctr) (TC 1.A.56) family. SLC31A subfamily. As to quaternary structure, self-interacts. Interacts with SWEET11 and COPT2.

The protein localises to the cell membrane. In terms of biological role, involved in the transport of copper, in cooperation with SWEET11 and COPT2. Contributes to the removal of copper (Cu) from xylem, and thus to the sensitivity toward bacterial pathogens such as X.oryzae pv. oryzae (Xoo). This chain is Copper transporter 1 (COPT1), found in Oryza sativa subsp. japonica (Rice).